We begin with the raw amino-acid sequence, 502 residues long: ATP synthase subunit alpha (502 aa).

ATP is bound at residue 169-176; that stretch reads GDRQTGKT.

This sequence belongs to the ATPase alpha/beta chains family. In terms of assembly, F-type ATPases have 2 components, CF(1) - the catalytic core - and CF(0) - the membrane proton channel. CF(1) has five subunits: alpha(3), beta(3), gamma(1), delta(1), epsilon(1). CF(0) has three main subunits: a(1), b(2) and c(9-12). The alpha and beta chains form an alternating ring which encloses part of the gamma chain. CF(1) is attached to CF(0) by a central stalk formed by the gamma and epsilon chains, while a peripheral stalk is formed by the delta and b chains.

The protein localises to the cell inner membrane. It carries out the reaction ATP + H2O + 4 H(+)(in) = ADP + phosphate + 5 H(+)(out). In terms of biological role, produces ATP from ADP in the presence of a proton gradient across the membrane. The alpha chain is a regulatory subunit. This Nitratidesulfovibrio vulgaris (strain DSM 19637 / Miyazaki F) (Desulfovibrio vulgaris) protein is ATP synthase subunit alpha.